The primary structure comprises 381 residues: Heme A synthase (381 aa).

The next 5 membrane-spanning stretches (helical) occupy residues 25–45 (GAVR…VAVG), 112–132 (LLGR…WWRG), 138–158 (LLLG…IGWI), 176–196 (LALH…LAAG), and 212–232 (VAGL…LVAG). Residue histidine 277 participates in heme binding. 3 consecutive transmembrane segments (helical) span residues 279 to 299 (LFAY…VRMA), 307 to 327 (AMGV…TLLL), and 329 to 349 (VPLW…IMAT). Histidine 337 contacts heme.

This sequence belongs to the COX15/CtaA family. Type 2 subfamily. Interacts with CtaB. Heme b serves as cofactor.

The protein localises to the cell membrane. It catalyses the reaction Fe(II)-heme o + 2 A + H2O = Fe(II)-heme a + 2 AH2. The protein operates within porphyrin-containing compound metabolism; heme A biosynthesis; heme A from heme O: step 1/1. In terms of biological role, catalyzes the conversion of heme O to heme A by two successive hydroxylations of the methyl group at C8. The first hydroxylation forms heme I, the second hydroxylation results in an unstable dihydroxymethyl group, which spontaneously dehydrates, resulting in the formyl group of heme A. The chain is Heme A synthase from Methylorubrum populi (strain ATCC BAA-705 / NCIMB 13946 / BJ001) (Methylobacterium populi).